Consider the following 271-residue polypeptide: 3-methyl-2-oxobutanoate hydroxymethyltransferase (271 aa).

Positions 53 and 92 each coordinate Mg(2+). 3-methyl-2-oxobutanoate-binding positions include Asp-53–Ser-54, Asp-92, and Lys-120. Glu-122 contributes to the Mg(2+) binding site. Glu-189 (proton acceptor) is an active-site residue.

This sequence belongs to the PanB family. In terms of assembly, homodecamer; pentamer of dimers. The cofactor is Mg(2+).

It localises to the cytoplasm. It catalyses the reaction 3-methyl-2-oxobutanoate + (6R)-5,10-methylene-5,6,7,8-tetrahydrofolate + H2O = 2-dehydropantoate + (6S)-5,6,7,8-tetrahydrofolate. It functions in the pathway cofactor biosynthesis; (R)-pantothenate biosynthesis; (R)-pantoate from 3-methyl-2-oxobutanoate: step 1/2. Functionally, catalyzes the reversible reaction in which hydroxymethyl group from 5,10-methylenetetrahydrofolate is transferred onto alpha-ketoisovalerate to form ketopantoate. This chain is 3-methyl-2-oxobutanoate hydroxymethyltransferase, found in Burkholderia mallei (strain NCTC 10247).